The following is a 570-amino-acid chain: RNA polymerase I termination factor (570 aa).

Residues 1 to 16 (MDSVSNLKSTNFQNNN) show a composition bias toward polar residues. Disordered regions lie at residues 1–21 (MDSV…PKES), 37–68 (HIKK…DMDW), and 100–138 (SSMR…AKIK). A compositionally biased stretch (basic residues) spans 37 to 56 (HIKKTKKKLKKQKKRKHGSK). Position 64 is a phosphothreonine (threonine 64). Residues 108–137 (RSCHKKSSNSRSERKKHRKRKSSKERKAKI) are compositionally biased toward basic residues. Residues 273-339 (KFTPSEENAL…SIYKHIRRKY (67 aa)) form the Myb-like 1 domain. Positions 340-391 (HIFEQRGKWTPEEDQELARLCLEKEGHWTEVGKLLGRMPEDCRDRWRNYMKC) constitute an HTH myb-type domain. Residues 367–389 (WTEVGKLLGRMPEDCRDRWRNYM) constitute a DNA-binding region (H-T-H motif). Myb-like domains are found at residues 392-486 (GSKR…NKLV) and 493-549 (SMLS…MREK).

In terms of assembly, interacts with FOB1. Interacts with the RENT complex subunits NET1 and SIR2.

It is found in the nucleus. The protein resides in the nucleolus. DNA-binding protein that recognizes sequence-specific replication termini (Ter sites) within rDNA. Binds to rDNA terminator elements and mediates efficient RNA polymerase I transcription termination. Required for rDNA silencing at the non-transcribed spacer 1 (NTS1). Promotes the association of SIR2 with NTS1 and contributes to maintenance of rDNA stability. This Saccharomyces cerevisiae (strain ATCC 204508 / S288c) (Baker's yeast) protein is RNA polymerase I termination factor.